We begin with the raw amino-acid sequence, 338 residues long: Transcription factor AP-4 (338 aa).

Positions Ile-48–Leu-99 constitute a bHLH domain. Residues Glu-100 to Leu-120 are leucine-zipper 1. Residues Gln-118–Asp-141 are disordered. Phosphoserine occurs at positions 123, 124, and 139. Residue Lys-147 forms a Glycyl lysine isopeptide (Lys-Gly) (interchain with G-Cter in SUMO2) linkage. A leucine-zipper 2 region spans residues Leu-151–Leu-179. Glycyl lysine isopeptide (Lys-Gly) (interchain with G-Cter in SUMO2) cross-links involve residues Lys-187, Lys-189, and Lys-285. A compositionally biased stretch (basic and acidic residues) spans Gln-283 to Arg-294. Positions Gln-283–Pro-338 are disordered.

In terms of assembly, efficient DNA binding requires dimerization with another bHLH protein. Homodimer.

It is found in the nucleus. Transcription factor that activates both viral and cellular genes by binding to the symmetrical DNA sequence 5'-CAGCTG-3'. The chain is Transcription factor AP-4 (TFAP4) from Homo sapiens (Human).